The primary structure comprises 127 residues: Mediator of RNA polymerase II transcription subunit 31 (127 aa).

This sequence belongs to the Mediator complex subunit 31 family. As to quaternary structure, component of the Mediator complex, which is composed of at least 21 subunits that form three structurally distinct submodules. The Mediator head module contains MED6, MED8, MED11, SRB4/MED17, SRB5/MED18, ROX3/MED19, SRB2/MED20 and SRB6/MED22, the middle module contains MED1, MED4, NUT1/MED5, MED7, CSE2/MED9, NUT2/MED10, SRB7/MED21 and SOH1/MED31, and the tail module contains MED2, PGD1/MED3, RGR1/MED14, GAL11/MED15 and SIN4/MED16. The head and the middle modules interact directly with RNA polymerase II, whereas the elongated tail module interacts with gene-specific regulatory proteins.

It localises to the nucleus. Its function is as follows. Component of the Mediator complex, a coactivator involved in the regulated transcription of nearly all RNA polymerase II-dependent genes. Mediator functions as a bridge to convey information from gene-specific regulatory proteins to the basal RNA polymerase II transcription machinery. The Mediator complex, having a compact conformation in its free form, is recruited to promoters by direct interactions with regulatory proteins and serves for the assembly of a functional preinitiation complex with RNA polymerase II and the general transcription factors. The Mediator complex unfolds to an extended conformation and partially surrounds RNA polymerase II, specifically interacting with the unphosphorylated form of the C-terminal domain (CTD) of RNA polymerase II. The Mediator complex dissociates from the RNA polymerase II holoenzyme and stays at the promoter when transcriptional elongation begins. The protein is Mediator of RNA polymerase II transcription subunit 31 (SOH1) of Saccharomyces cerevisiae (strain ATCC 204508 / S288c) (Baker's yeast).